The primary structure comprises 462 residues: Cysteine proteinase RD21A (462 aa).

The signal sequence occupies residues 1–21 (MGFLKPTMAILFLAMVAVSSA). A propeptide spans 22-136 (VDMSIISYDE…LRYEARVGDE (115 aa)) (activation peptide). Asn90 carries N-linked (GlcNAc...) asparagine glycosylation. 5 disulfide bridges follow: Cys158/Cys200, Cys192/Cys233, Cys291/Cys342, Cys375/Cys387, and Cys381/Cys402. Residue Cys161 is part of the active site. Active-site residues include His297 and Asn317. Positions 353–462 (KNGENPPNPG…FWSQGRKNIA (110 aa)) are cleaved as a propeptide — removed in mature form. N-linked (GlcNAc...) asparagine glycosylation occurs at Asn414.

The protein belongs to the peptidase C1 family. As to quaternary structure, interacts with SERPIN1. Interacts with PRN2. Interacts with WSCP. Interacts with TZF4, TZF5 and TZF6.

Its subcellular location is the vacuole. It localises to the golgi apparatus. The protein resides in the cytoplasm. It is found in the stress granule. The protein localises to the P-body. Its activity is regulated as follows. Inhibited by the cysteine protease inhibitor E64 (L-trans-epoxysuccinyl-leucylamide-(4-guanido)-butane). Functionally, cysteine protease that plays a role in immunity, senescence, and biotic and abiotic stresses. Involved in immunity against the necrotrophic fungal pathogen Botrytis cinerea. Involved in elicitor-stimulated programmed cell death (PCD). During infection by the necrotrophic fungal pathogen Botrytis cinerea, functions as a PCD-promoting protease that is released from the ER body or vacuole to the cytoplasm. Accumulates in endoplasmic reticulum-derived bodies in epidermal cells and may participate in cell death in stressed or injured cells. Involved in water stress-induced cell death through its protease activity that is released to the cytoplasm after vacuolar collapse. Possesses protease activity in vitro and is involved in cell death in the transmitting tract and septum epidermis during flower development. Possesses peptide ligase activity. Can ligate peptides to unmodified N-termini of acceptor proteins. Probably ligates through a thioester intermediate. This is Cysteine proteinase RD21A from Arabidopsis thaliana (Mouse-ear cress).